The sequence spans 161 residues: 2-C-methyl-D-erythritol 2,4-cyclodiphosphate synthase (161 aa).

The a divalent metal cation site is built by Asp-9 and His-11. Residues 9–11 and 37–38 contribute to the 4-CDP-2-C-methyl-D-erythritol 2-phosphate site; these read DFH and HS. His-45 contributes to the a divalent metal cation binding site. 4-CDP-2-C-methyl-D-erythritol 2-phosphate contacts are provided by residues 59–61, 64–68, 135–138, and Arg-145; these read DIG, FPDTD, and TTTE.

It belongs to the IspF family. Homotrimer. It depends on a divalent metal cation as a cofactor.

It carries out the reaction 4-CDP-2-C-methyl-D-erythritol 2-phosphate = 2-C-methyl-D-erythritol 2,4-cyclic diphosphate + CMP. It functions in the pathway isoprenoid biosynthesis; isopentenyl diphosphate biosynthesis via DXP pathway; isopentenyl diphosphate from 1-deoxy-D-xylulose 5-phosphate: step 4/6. Functionally, involved in the biosynthesis of isopentenyl diphosphate (IPP) and dimethylallyl diphosphate (DMAPP), two major building blocks of isoprenoid compounds. Catalyzes the conversion of 4-diphosphocytidyl-2-C-methyl-D-erythritol 2-phosphate (CDP-ME2P) to 2-C-methyl-D-erythritol 2,4-cyclodiphosphate (ME-CPP) with a corresponding release of cytidine 5-monophosphate (CMP). The sequence is that of 2-C-methyl-D-erythritol 2,4-cyclodiphosphate synthase from Leptospira borgpetersenii serovar Hardjo-bovis (strain JB197).